The sequence spans 147 residues: Large ribosomal subunit protein uL11 (147 aa).

This sequence belongs to the universal ribosomal protein uL11 family. In terms of assembly, part of the ribosomal stalk of the 50S ribosomal subunit. Interacts with L10 and the large rRNA to form the base of the stalk. L10 forms an elongated spine to which L12 dimers bind in a sequential fashion forming a multimeric L10(L12)X complex. Post-translationally, one or more lysine residues are methylated.

Functionally, forms part of the ribosomal stalk which helps the ribosome interact with GTP-bound translation factors. The protein is Large ribosomal subunit protein uL11 of Thermus thermophilus (strain ATCC BAA-163 / DSM 7039 / HB27).